Consider the following 982-residue polypeptide: Serine/threonine-protein kinase PknD (982 aa).

Residues 51–342 enclose the Protein kinase domain; the sequence is YQIIKSIGKG…ELIRDIENYL (292 aa). ATP is bound by residues 57 to 65 and Lys-80; that span reads IGKGGMGEV. The active-site Proton acceptor is the Asp-186.

The protein belongs to the protein kinase superfamily. Ser/Thr protein kinase family. Post-translationally, autophosphorylated on serine and threonine residues.

The catalysed reaction is L-seryl-[protein] + ATP = O-phospho-L-seryl-[protein] + ADP + H(+). It catalyses the reaction L-threonyl-[protein] + ATP = O-phospho-L-threonyl-[protein] + ADP + H(+). Functionally, together with the serine/threonine kinase Pkn1, may play a role in the specific interactions with host proteins during intracellular growth. The sequence is that of Serine/threonine-protein kinase PknD from Protochlamydia amoebophila (strain UWE25).